The sequence spans 220 residues: MGATARSLRLALGLLLLGTLPRGADACSCSPVHPQQAFCNADVVIRAKAVSEKEVDSGNDIYGNPIKRIQYEIKQIKMFKGPEKDIEFIYTAPSSAVCGVSLDVGGKKEYLIAGKAEGDGKMHITLCDFIVPWDTLSTTQKKSLNHRYQMGCECKITRCPMIPCYISSPDECLWMDWVTEKSINGHQAKFFACIKRSDGSCAWYRGAAPPKQEFLDIEDP.

The signal sequence occupies residues 1–26 (MGATARSLRLALGLLLLGTLPRGADA). Cys27 contributes to the Zn(2+) binding site. Involved in metalloproteinase-binding regions lie at residues 27–30 (CSCS) and 95–96 (SA). Intrachain disulfides connect Cys27-Cys98, Cys29-Cys127, Cys39-Cys152, Cys154-Cys201, Cys159-Cys164, and Cys172-Cys193. One can recognise an NTR domain in the interval 27–152 (CSCSPVHPQQ…SLNHRYQMGC (126 aa)).

Belongs to the protease inhibitor I35 (TIMP) family. In terms of assembly, interacts (via the C-terminal) with MMP2 (via the C-terminal PEX domain); the interaction inhibits the MMP2 activity. Post-translationally, the activity of TIMP2 is dependent on the presence of disulfide bonds. In terms of tissue distribution, predominantly expressed in the lung in alveolar macrophages and epithelial cells. Also found in brain, kidney, intestine, spleen and heart.

The protein localises to the secreted. Complexes with metalloproteinases (such as collagenases) and irreversibly inactivates them by binding to their catalytic zinc cofactor. In Cavia porcellus (Guinea pig), this protein is Metalloproteinase inhibitor 2 (TIMP2).